We begin with the raw amino-acid sequence, 516 residues long: Cilia- and flagella-associated protein 53 (516 aa).

Coiled coils occupy residues E217 to K283 and M316 to K440. Basic and acidic residues-rich tracts occupy residues K417–A436 and Q461–E472. 2 disordered regions span residues K417 to Q443 and Y455 to L475.

The protein belongs to the CFAP53 family.

It localises to the cytoplasm. The protein localises to the cytoskeleton. It is found in the cilium axoneme. The protein resides in the microtubule organizing center. Its subcellular location is the centrosome. It localises to the centriolar satellite. Microtubule inner protein (MIP) part of the dynein-decorated doublet microtubules (DMTs) in cilia axoneme, which is required for motile cilia beating. Regulates motility patterns of both 9+0 and 9+2 motile cilia through differential localization and recruitment of axonemal dynein components. Required for motile cilium formation and movement. Involved in the establishment of left-right symmetry during embryogenesis. In Xenopus laevis (African clawed frog), this protein is Cilia- and flagella-associated protein 53.